We begin with the raw amino-acid sequence, 144 residues long: Nucleoside diphosphate kinase (144 aa).

ATP contacts are provided by K9, F57, R85, T91, R102, and N112. H115 functions as the Pros-phosphohistidine intermediate in the catalytic mechanism.

This sequence belongs to the NDK family. In terms of assembly, homotetramer. The cofactor is Mg(2+).

Its subcellular location is the cytoplasm. The enzyme catalyses a 2'-deoxyribonucleoside 5'-diphosphate + ATP = a 2'-deoxyribonucleoside 5'-triphosphate + ADP. The catalysed reaction is a ribonucleoside 5'-diphosphate + ATP = a ribonucleoside 5'-triphosphate + ADP. Its function is as follows. Major role in the synthesis of nucleoside triphosphates other than ATP. The ATP gamma phosphate is transferred to the NDP beta phosphate via a ping-pong mechanism, using a phosphorylated active-site intermediate. This chain is Nucleoside diphosphate kinase, found in Chlamydia pneumoniae (Chlamydophila pneumoniae).